The sequence spans 277 residues: Large ribosomal subunit protein uL2 (277 aa).

Disordered regions lie at residues Ile24–Gly55 and Arg221–Lys277.

Belongs to the universal ribosomal protein uL2 family. In terms of assembly, part of the 50S ribosomal subunit. Forms a bridge to the 30S subunit in the 70S ribosome.

One of the primary rRNA binding proteins. Required for association of the 30S and 50S subunits to form the 70S ribosome, for tRNA binding and peptide bond formation. It has been suggested to have peptidyltransferase activity; this is somewhat controversial. Makes several contacts with the 16S rRNA in the 70S ribosome. In Listeria innocua serovar 6a (strain ATCC BAA-680 / CLIP 11262), this protein is Large ribosomal subunit protein uL2.